A 223-amino-acid polypeptide reads, in one-letter code: Phosphoribosylformylglycinamidine synthase subunit PurQ (223 aa).

Residues 3–223 form the Glutamine amidotransferase type-1 domain; the sequence is FAVLVFPGSN…MVKSWREQHV (221 aa). Cysteine 85 functions as the Nucleophile in the catalytic mechanism. Active-site residues include histidine 193 and glutamate 195.

As to quaternary structure, part of the FGAM synthase complex composed of 1 PurL, 1 PurQ and 2 PurS subunits.

It is found in the cytoplasm. The catalysed reaction is N(2)-formyl-N(1)-(5-phospho-beta-D-ribosyl)glycinamide + L-glutamine + ATP + H2O = 2-formamido-N(1)-(5-O-phospho-beta-D-ribosyl)acetamidine + L-glutamate + ADP + phosphate + H(+). It carries out the reaction L-glutamine + H2O = L-glutamate + NH4(+). Its pathway is purine metabolism; IMP biosynthesis via de novo pathway; 5-amino-1-(5-phospho-D-ribosyl)imidazole from N(2)-formyl-N(1)-(5-phospho-D-ribosyl)glycinamide: step 1/2. Part of the phosphoribosylformylglycinamidine synthase complex involved in the purines biosynthetic pathway. Catalyzes the ATP-dependent conversion of formylglycinamide ribonucleotide (FGAR) and glutamine to yield formylglycinamidine ribonucleotide (FGAM) and glutamate. The FGAM synthase complex is composed of three subunits. PurQ produces an ammonia molecule by converting glutamine to glutamate. PurL transfers the ammonia molecule to FGAR to form FGAM in an ATP-dependent manner. PurS interacts with PurQ and PurL and is thought to assist in the transfer of the ammonia molecule from PurQ to PurL. The sequence is that of Phosphoribosylformylglycinamidine synthase subunit PurQ from Staphylococcus aureus (strain MSSA476).